A 249-amino-acid chain; its full sequence is Vitamin B12 import ATP-binding protein BtuD (249 aa).

The 233-residue stretch at 1-233 (MSIVMQLQDV…PNLAQAYGMN (233 aa)) folds into the ABC transporter domain. 33–40 (GPNGAGKS) provides a ligand contact to ATP.

It belongs to the ABC transporter superfamily. Vitamin B12 importer (TC 3.A.1.13.1) family. The complex is composed of two ATP-binding proteins (BtuD), two transmembrane proteins (BtuC) and a solute-binding protein (BtuF).

Its subcellular location is the cell inner membrane. The catalysed reaction is an R-cob(III)alamin(out) + ATP + H2O = an R-cob(III)alamin(in) + ADP + phosphate + H(+). Its function is as follows. Part of the ABC transporter complex BtuCDF involved in vitamin B12 import. Responsible for energy coupling to the transport system. This Escherichia coli (strain K12 / DH10B) protein is Vitamin B12 import ATP-binding protein BtuD.